We begin with the raw amino-acid sequence, 1198 residues long: Structural polyprotein (1198 aa).

The interval 2 to 15 (TKKPGGPGKNRAIN) is interaction with host EXOC1. Residues 2–109 (TKKPGGPGKN…RKQNKRGGNE (108 aa)) are Cytoplasmic-facing. Positions 37–72 (LLDGRGPVRFVLALITFFKFTALAPTKALLGRWKAV) are hydrophobic; homodimerization of capsid protein C. The propeptide at 106–127 (GGNEGSIMWLASLAVVIAYAGA) is ER anchor for the capsid protein C, removed in mature form by serine protease NS3. A helical transmembrane segment spans residues 110 to 130 (GSIMWLASLAVVIAYAGAMKL). Over 131 to 253 (SNFQGKLLMT…ATRYLMKTEN (123 aa)) the chain is Extracellular. An N-linked (GlcNAc...) asparagine; by host glycan is attached at N142. A helical transmembrane segment spans residues 254–274 (WIIRNPGYAFLAATLGWMLGS). The Cytoplasmic portion of the chain corresponds to 275–279 (NNGQR). The chain crosses the membrane as a helical span at residues 280-294 (VVFTILLLLVAPAYS). Topologically, residues 295-746 (FNCLGMGNRD…QVFGGAFRTL (452 aa)) are extracellular. 6 disulfide bridges follow: C297–C324, C354–C410, C354–C415, C368–C399, C386–C410, and C386–C415. Residues 392 to 405 (DRGWGNGCGLFGKG) form a fusion peptide region. N448 carries N-linked (GlcNAc...) asparagine; by host glycosylation. Intrachain disulfides connect C484–C581 and C598–C629. The helical transmembrane segment at 747-767 (FGGMSWITQGLMGALLLWMGV) threads the bilayer. Over 768–773 (NARDRS) the chain is Cytoplasmic. The helical transmembrane segment at 774 to 794 (IALAFLATGGVLVFLATNVHA) threads the bilayer. The Extracellular segment spans residues 795 to 1198 (DTGCAIDITR…CADAWGHHLH (404 aa)). 6 cysteine pairs are disulfide-bonded: C798/C809, C849/C937, C973/C1017, C1074/C1123, C1085/C1106, and C1107/C1110. N-linked (GlcNAc...) asparagine; by host glycans are attached at residues N924 and N1001. Positions 1152 to 1177 (VDPFSAGPSGDVSGHPGGPSQEVDGQ) are disordered.

As to quaternary structure, homodimer. Interacts (via N-terminus) with host EXOC1 (via C-terminus); this interaction results in EXOC1 degradation through the proteasome degradation pathway. Interacts with host CAPRIN1; this interaction is involved in the suppression of the integrated stress response. Forms heterodimers with envelope protein E in the endoplasmic reticulum and Golgi. In terms of assembly, homodimer; in the endoplasmic reticulum and Golgi. Interacts with protein prM. Interacts with non-structural protein 1. Genome polyprotein: Specific enzymatic cleavages in vivo yield mature proteins. Cleavages in the lumen of endoplasmic reticulum are performed by host signal peptidase, whereas cleavages in the cytoplasmic side are performed by serine protease NS3. Signal cleavage at the 2K-4B site requires a prior NS3 protease-mediated cleavage at the 4A-2K site. In terms of processing, cleaved in post-Golgi vesicles by a host furin, releasing the mature small envelope protein M, and peptide pr. This cleavage is incomplete as up to 30% of viral particles still carry uncleaved prM. Post-translationally, N-glycosylated.

Its subcellular location is the secreted. It localises to the virion membrane. The protein localises to the host endoplasmic reticulum membrane. Its function is as follows. Plays a role in virus budding by binding to the cell membrane and gathering the viral RNA into a nucleocapsid that forms the core of a mature virus particle. During virus entry, may induce genome penetration into the host cytoplasm after hemifusion induced by the surface proteins. Can migrate to the cell nucleus where it modulates host functions. Overcomes the anti-viral effects of host EXOC1 by sequestering and degrading the latter through the proteasome degradation pathway. Inhibits the integrated stress response (ISR) in the infected cell by binding to host CAPRIN1. In terms of biological role, inhibits RNA silencing by interfering with host Dicer. Prevents premature fusion activity of envelope proteins in trans-Golgi by binding to envelope protein E at pH6.0. After virion release in extracellular space, gets dissociated from E dimers. Functionally, acts as a chaperone for envelope protein E during intracellular virion assembly by masking and inactivating envelope protein E fusion peptide. prM is the only viral peptide matured by host furin in the trans-Golgi network probably to avoid catastrophic activation of the viral fusion activity in acidic Golgi compartment prior to virion release. prM-E cleavage is inefficient, and many virions are only partially matured. These uncleaved prM would play a role in immune evasion. Its function is as follows. May play a role in virus budding. Exerts cytotoxic effects by activating a mitochondrial apoptotic pathway through M ectodomain. May display a viroporin activity. In terms of biological role, binds to host cell surface receptor and mediates fusion between viral and cellular membranes. Envelope protein is synthesized in the endoplasmic reticulum in the form of heterodimer with protein prM. They play a role in virion budding in the ER, and the newly formed immature particle is covered with 60 spikes composed of heterodimer between precursor prM and envelope protein E. The virion is transported to the Golgi apparatus where the low pH causes dissociation of PrM-E heterodimers and formation of E homodimers. prM-E cleavage is inefficient, and many virions are only partially matured. These uncleaved prM would play a role in immune evasion. May play a role in neuroinvasiveness. This is Structural polyprotein from Japanese encephalitis virus (strain Jaoars982) (JEV).